The sequence spans 622 residues: MATVLSRALKLPGKKSPDLGEYDPLTQADSDESEDDLVLNLQKNGGVKNGKSPLGEAPEPDSDAEVAEAAKPHLSEVTTEGYPSEPLGGLEQKAASSLVSYVRTSVFLLTLGISMILVLLCAFLIPCPPRDLHSTWSRHLGSQGGGDLSPLELADVNGDGLRDVLLSFVMSRNGSAVGVSRPAANLVCLSGMNGSTLWSSLLPEEARDITCLELMPGSLAETICLVTGTHKMLSAFNATSGKAIWTLNPNYLSNGTLAAPVVVLPDLDEDGVRDLVVLAIGELQPDLCFLLVSGRTGNPVGRPVKYNIVGVGNLIGPQVYITTNGAVYILFGFGNIQAVALRDIFVQAQNRDSSPPSLQIEEPEWEKRRSINLSELIDVYSDGVELLQMVKAPDSNCSNLLITTRQSLVLLRGQNLTPYWALRLQGLRSQPTPGYFTDDQTLDFLLQIQDGVGMKKMMVVDGDSGSIVWSYRAPCHMKETPATSAVTSDQKSVFLFWAEGLSAASPNSDIILGTEPPSLHHLYLLHPAFPSILLDLANTTGTVTASEVGINDLWKDAFYVTRTTGPSSEGHPAALVVSKLSLRWALMEGQMAQLQESTPKIGRGELRRFLSRIKFVEAPYEI.

Residues Met1–Glu68 are disordered. Residue Ser16 is modified to Phosphoserine. Thr26 bears the Phosphothreonine mark. A phosphoserine mark is found at Ser30, Ser33, and Ser62. The chain crosses the membrane as a helical span at residues Thr104–Leu124.

It belongs to the FAM234 family.

The protein localises to the membrane. The protein resides in the golgi outpost. It is found in the cytoplasm. It localises to the cytoskeleton. Its subcellular location is the microtubule organizing center. This is Protein FAM234B from Homo sapiens (Human).